We begin with the raw amino-acid sequence, 477 residues long: Methylenetetrahydrofolate--tRNA-(uracil-5-)-methyltransferase TrmFO (477 aa).

FAD is bound at residue 15-20; sequence GAGLAG.

It belongs to the MnmG family. TrmFO subfamily. The cofactor is FAD.

It localises to the cytoplasm. The enzyme catalyses uridine(54) in tRNA + (6R)-5,10-methylene-5,6,7,8-tetrahydrofolate + NADH + H(+) = 5-methyluridine(54) in tRNA + (6S)-5,6,7,8-tetrahydrofolate + NAD(+). The catalysed reaction is uridine(54) in tRNA + (6R)-5,10-methylene-5,6,7,8-tetrahydrofolate + NADPH + H(+) = 5-methyluridine(54) in tRNA + (6S)-5,6,7,8-tetrahydrofolate + NADP(+). Its function is as follows. Catalyzes the folate-dependent formation of 5-methyl-uridine at position 54 (M-5-U54) in all tRNAs. In Nitrobacter hamburgensis (strain DSM 10229 / NCIMB 13809 / X14), this protein is Methylenetetrahydrofolate--tRNA-(uracil-5-)-methyltransferase TrmFO.